We begin with the raw amino-acid sequence, 114 residues long: Protein 4 (114 aa).

The chain is Protein 4 (4) from Hordeum vulgare (Barley).